The following is a 390-amino-acid chain: Ribonucleoside-diphosphate reductase subunit M2 (390 aa).

The residue at position 20 (Ser20) is a Phosphoserine. The residue at position 33 (Thr33) is a Phosphothreonine. A Cy motif is present at residues 49–51 (RRI). Residues Asp139, Glu170, and His173 each coordinate Fe cation. Tyr177 is an active-site residue. Fe cation-binding residues include Glu233, Glu267, and His270.

The protein belongs to the ribonucleoside diphosphate reductase small chain family. Heterodimer of a large and a small subunit. Interacts (via Cy motif and when phosphorylated at Thr-33) with CCNF; the interaction occurs exclusively in G2 and early M. The cofactor is Fe cation. In terms of processing, phosphorylation on Ser-20 relieves the inhibitory effect on Wnt signaling. Phosphorylated on Thr-33 by CDK1 and CDK2; predominantly in G2 and M phase. Post-translationally, ubiquitinated by the SCF(CCNF) E3 ubiquitin-protein ligase complex; leading to its degradation by the proteasome.

It is found in the cytoplasm. The protein localises to the nucleus. It carries out the reaction a 2'-deoxyribonucleoside 5'-diphosphate + [thioredoxin]-disulfide + H2O = a ribonucleoside 5'-diphosphate + [thioredoxin]-dithiol. Functionally, provides the precursors necessary for DNA synthesis. Catalyzes the biosynthesis of deoxyribonucleotides from the corresponding ribonucleotides. Inhibits Wnt signaling. In Rattus norvegicus (Rat), this protein is Ribonucleoside-diphosphate reductase subunit M2 (Rrm2).